Reading from the N-terminus, the 482-residue chain is Dual specificity protein phosphatase 10 (482 aa).

The 118-residue stretch at 168–285 (PSQGPVIIDC…FKQNHENLCD (118 aa)) folds into the Rhodanese domain. Residues 199-215 (KISRRRLQQGKITVLDL) are interaction with MAP kinases. The 144-residue stretch at 321–464 (ELTPILPFLF…LLEFEEDLNN (144 aa)) folds into the Tyrosine-protein phosphatase domain. Residue Cys-408 is the Phosphocysteine intermediate of the active site.

Belongs to the protein-tyrosine phosphatase family. Non-receptor class dual specificity subfamily. Monomer. Interacts with MAPK14.

The protein localises to the cytoplasm. It is found in the nucleus. It carries out the reaction O-phospho-L-tyrosyl-[protein] + H2O = L-tyrosyl-[protein] + phosphate. It catalyses the reaction O-phospho-L-seryl-[protein] + H2O = L-seryl-[protein] + phosphate. The catalysed reaction is O-phospho-L-threonyl-[protein] + H2O = L-threonyl-[protein] + phosphate. Protein phosphatase involved in the inactivation of MAP kinases. Has a specificity for the MAPK11/MAPK12/MAPK13/MAPK14 subfamily. It preferably dephosphorylates p38. This chain is Dual specificity protein phosphatase 10 (DUSP10), found in Bos taurus (Bovine).